The sequence spans 76 residues: Protein krueppel (76 aa).

C2H2-type zinc fingers lie at residues 11-33 and 39-61; these read FECSECHKRFTRDHHLKTHLRLH and YSCPHCPRHFVQVANLRRHLRVH.

This sequence belongs to the krueppel C2H2-type zinc-finger protein family.

It is found in the nucleus. In terms of biological role, krueppel is a gap class segmentation protein. This Manduca sexta (Tobacco hawkmoth) protein is Protein krueppel (Kr).